We begin with the raw amino-acid sequence, 151 residues long: Allatostatin-A (151 aa).

The N-terminal stretch at 1 to 21 is a signal peptide; the sequence is MNSLHAHLLLLAVCCVGYIAS. A propeptide spanning residues 22–54 is cleaved from the precursor; sequence SPVIGQDQRSGDSDADVLLAADEMADNGGDNID. A leucine amide mark is found at Leu64, Leu88, and Leu99. Residues 103–135 constitute a propeptide that is removed on maturation; sequence SDYDYDQDNEIDYRVPPANYLAAERAVRPGRQN. The interval 131–151 is disordered; that stretch reads PGRQNKRTTRPQPFNFGLGRR. Position 148 is a leucine amide (Leu148).

It belongs to the allatostatin family.

Its subcellular location is the secreted. May act as a neurotransmitter or neuromodulator. This chain is Allatostatin-A (AstA), found in Drosophila melanogaster (Fruit fly).